The primary structure comprises 255 residues: MSMLIFNIRVARHKALLSRIVSTNMFNPMFRSLRPIQKSFSEISILRVFNKPPIKKFHNSNILKDITSKRNATPAKIAWQAMTTREPFLVYQAKADKKISLIYLLTVGMLINVCVITSFASVDIYRAKDEIFANWVDMDYYEKLSYIGSAFITPALYFTLTLILFLPRRNIYSISTLPSQRFEIVTGFLSPFNKLYFSKSLIVPRKDVSIVTYSLQKNPITLKIRDRPFYYLLNANGKYAGNSKDVLFCVIGNRY.

The next 2 membrane-spanning stretches (helical) occupy residues 99-119 (ISLIYLLTVGMLINVCVITSF) and 146-166 (YIGSAFITPALYFTLTLILFL).

It is found in the mitochondrion membrane. This is an uncharacterized protein from Schizosaccharomyces pombe (strain 972 / ATCC 24843) (Fission yeast).